A 188-amino-acid chain; its full sequence is Trafficking protein particle complex subunit 5 (188 aa).

A Phosphoserine modification is found at S10.

The protein belongs to the TRAPP small subunits family. BET3 subfamily. As to quaternary structure, component of the multisubunit TRAPP (transport protein particle) complex, which includes at least TRAPPC2, TRAPPC2L, TRAPPC3, TRAPPC3L, TRAPPC4, TRAPPC5, TRAPPC8, TRAPPC9, TRAPPC10, TRAPPC11 and TRAPPC12.

It is found in the golgi apparatus. Its subcellular location is the cis-Golgi network. The protein resides in the endoplasmic reticulum. In terms of biological role, may play a role in vesicular transport from endoplasmic reticulum to Golgi. In Bos taurus (Bovine), this protein is Trafficking protein particle complex subunit 5 (TRAPPC5).